We begin with the raw amino-acid sequence, 79 residues long: Acyl carrier protein (79 aa).

Residues 2–77 form the Carrier domain; it reads SEIGERVKKI…DATKFLEKNA (76 aa). Ser37 bears the O-(pantetheine 4'-phosphoryl)serine mark.

The protein belongs to the acyl carrier protein (ACP) family. Post-translationally, 4'-phosphopantetheine is transferred from CoA to a specific serine of apo-ACP by AcpS. This modification is essential for activity because fatty acids are bound in thioester linkage to the sulfhydryl of the prosthetic group.

Its subcellular location is the cytoplasm. The protein operates within lipid metabolism; fatty acid biosynthesis. Functionally, carrier of the growing fatty acid chain in fatty acid biosynthesis. The sequence is that of Acyl carrier protein from Nitrobacter hamburgensis (strain DSM 10229 / NCIMB 13809 / X14).